The chain runs to 166 residues: MANIEKQAGELQEKLIAVNRVSKTVKGGRIMSFTALTVVGDGNGRVGFGYGKAREVPAAIQKAMEKARRNMINVALHEGTLQHPVKGIHTGSRVFMQPASEGTGIIAGGAMRAVLEVAGVRNVLSKAYGSTNPINVVRATIDALANMKSPEMVAAKRGKTVDEILG.

The 64-residue stretch at 11 to 74 folds into the S5 DRBM domain; it reads LQEKLIAVNR…EKARRNMINV (64 aa).

It belongs to the universal ribosomal protein uS5 family. As to quaternary structure, part of the 30S ribosomal subunit. Contacts proteins S4 and S8.

With S4 and S12 plays an important role in translational accuracy. Functionally, located at the back of the 30S subunit body where it stabilizes the conformation of the head with respect to the body. The sequence is that of Small ribosomal subunit protein uS5 from Mannheimia succiniciproducens (strain KCTC 0769BP / MBEL55E).